The primary structure comprises 239 residues: uncharacterized protein (239 aa).

This is an uncharacterized protein from Escherichia coli O157:H7.